Here is a 119-residue protein sequence, read N- to C-terminus: Large ribosomal subunit protein bL20 (119 aa).

The protein belongs to the bacterial ribosomal protein bL20 family.

Its function is as follows. Binds directly to 23S ribosomal RNA and is necessary for the in vitro assembly process of the 50S ribosomal subunit. It is not involved in the protein synthesizing functions of that subunit. In Caldanaerobacter subterraneus subsp. tengcongensis (strain DSM 15242 / JCM 11007 / NBRC 100824 / MB4) (Thermoanaerobacter tengcongensis), this protein is Large ribosomal subunit protein bL20.